The primary structure comprises 483 residues: Glucose-1-phosphate adenylyltransferase large subunit 3, chloroplastic/amyloplastic (483 aa).

The protein belongs to the bacterial/plant glucose-1-phosphate adenylyltransferase family. Heterotetramer. In terms of tissue distribution, tubers.

It localises to the plastid. The protein localises to the chloroplast. It is found in the amyloplast. It carries out the reaction alpha-D-glucose 1-phosphate + ATP + H(+) = ADP-alpha-D-glucose + diphosphate. The protein operates within glycan biosynthesis; starch biosynthesis. Activated by 3'phosphoglycerate, inhibited by orthophosphate. Allosteric regulation. Its function is as follows. This protein plays a role in synthesis of starch. It catalyzes the synthesis of the activated glycosyl donor, ADP-glucose from Glc-1-P and ATP. The protein is Glucose-1-phosphate adenylyltransferase large subunit 3, chloroplastic/amyloplastic (AGPS3) of Solanum tuberosum (Potato).